The chain runs to 236 residues: Leucyl/phenylalanyl-tRNA--protein transferase (236 aa).

Belongs to the L/F-transferase family.

It localises to the cytoplasm. The enzyme catalyses N-terminal L-lysyl-[protein] + L-leucyl-tRNA(Leu) = N-terminal L-leucyl-L-lysyl-[protein] + tRNA(Leu) + H(+). It carries out the reaction N-terminal L-arginyl-[protein] + L-leucyl-tRNA(Leu) = N-terminal L-leucyl-L-arginyl-[protein] + tRNA(Leu) + H(+). It catalyses the reaction L-phenylalanyl-tRNA(Phe) + an N-terminal L-alpha-aminoacyl-[protein] = an N-terminal L-phenylalanyl-L-alpha-aminoacyl-[protein] + tRNA(Phe). In terms of biological role, functions in the N-end rule pathway of protein degradation where it conjugates Leu, Phe and, less efficiently, Met from aminoacyl-tRNAs to the N-termini of proteins containing an N-terminal arginine or lysine. The sequence is that of Leucyl/phenylalanyl-tRNA--protein transferase from Vibrio atlanticus (strain LGP32) (Vibrio splendidus (strain Mel32)).